A 671-amino-acid chain; its full sequence is DNA ligase (671 aa).

Residues 32–36 (DAEYD), 81–82 (SL), and E113 contribute to the NAD(+) site. Catalysis depends on K115, which acts as the N6-AMP-lysine intermediate. NAD(+) contacts are provided by R136, E173, K290, and K314. Zn(2+)-binding residues include C408, C411, C426, and C432. In terms of domain architecture, BRCT spans 593 to 671 (EIDSPFAGKT…EAEMMRLLGE (79 aa)).

This sequence belongs to the NAD-dependent DNA ligase family. LigA subfamily. Mg(2+) is required as a cofactor. The cofactor is Mn(2+).

It catalyses the reaction NAD(+) + (deoxyribonucleotide)n-3'-hydroxyl + 5'-phospho-(deoxyribonucleotide)m = (deoxyribonucleotide)n+m + AMP + beta-nicotinamide D-nucleotide.. Functionally, DNA ligase that catalyzes the formation of phosphodiester linkages between 5'-phosphoryl and 3'-hydroxyl groups in double-stranded DNA using NAD as a coenzyme and as the energy source for the reaction. It is essential for DNA replication and repair of damaged DNA. This is DNA ligase from Klebsiella pneumoniae subsp. pneumoniae (strain ATCC 700721 / MGH 78578).